Reading from the N-terminus, the 158-residue chain is 2-C-methyl-D-erythritol 2,4-cyclodiphosphate synthase (158 aa).

A divalent metal cation contacts are provided by D9 and H11. 4-CDP-2-C-methyl-D-erythritol 2-phosphate contacts are provided by residues 9-11 (DAH) and 35-36 (HS). Position 43 (H43) interacts with a divalent metal cation. 4-CDP-2-C-methyl-D-erythritol 2-phosphate-binding positions include 57-59 (DIG), 62-66 (FPDTD), 133-136 (TTTE), F140, and R143.

Belongs to the IspF family. Homotrimer. Requires a divalent metal cation as cofactor.

It carries out the reaction 4-CDP-2-C-methyl-D-erythritol 2-phosphate = 2-C-methyl-D-erythritol 2,4-cyclic diphosphate + CMP. It functions in the pathway isoprenoid biosynthesis; isopentenyl diphosphate biosynthesis via DXP pathway; isopentenyl diphosphate from 1-deoxy-D-xylulose 5-phosphate: step 4/6. Its function is as follows. Involved in the biosynthesis of isopentenyl diphosphate (IPP) and dimethylallyl diphosphate (DMAPP), two major building blocks of isoprenoid compounds. Catalyzes the conversion of 4-diphosphocytidyl-2-C-methyl-D-erythritol 2-phosphate (CDP-ME2P) to 2-C-methyl-D-erythritol 2,4-cyclodiphosphate (ME-CPP) with a corresponding release of cytidine 5-monophosphate (CMP). This chain is 2-C-methyl-D-erythritol 2,4-cyclodiphosphate synthase, found in Methylococcus capsulatus (strain ATCC 33009 / NCIMB 11132 / Bath).